The primary structure comprises 280 residues: Tritrans,polycis-undecaprenyl-diphosphate synthase (geranylgeranyl-diphosphate specific) (280 aa).

Residue Asp57 is part of the active site. Mg(2+) is bound at residue Asp57. Substrate is bound by residues 58–61 (GNRR), Arg70, His74, and 102–104 (STE). Residue Asn105 is the Proton acceptor of the active site. Substrate is bound by residues Phe106, Arg108, Arg229, and 235–237 (RIS). A Mg(2+)-binding site is contributed by Glu248.

The protein belongs to the UPP synthase family. In terms of assembly, homodimer. The cofactor is Mg(2+).

It carries out the reaction geranylgeranyl diphosphate + 7 isopentenyl diphosphate = tri-trans,hepta-cis-undecaprenyl diphosphate + 7 diphosphate. Its function is as follows. Catalyzes the sequential condensation of isopentenyl diphosphate (IPP) with geranylgeranyl diphosphate (GGPP) to yield (2Z,6Z,10Z,14Z,18Z,22Z,26Z,30E,34E,38E)-undecaprenyl diphosphate (tritrans,heptacis-UPP). It is probably the precursor of glycosyl carrier lipids. This is Tritrans,polycis-undecaprenyl-diphosphate synthase (geranylgeranyl-diphosphate specific) from Methanocaldococcus jannaschii (strain ATCC 43067 / DSM 2661 / JAL-1 / JCM 10045 / NBRC 100440) (Methanococcus jannaschii).